We begin with the raw amino-acid sequence, 72 residues long: Defensin-like protein 35 (72 aa).

Residues 1-22 (MASNKISFSFVLCLYMCSLLDA) form the signal peptide. Disulfide bonds link Cys32–Cys58, Cys44–Cys67, and Cys48–Cys69.

This sequence belongs to the DEFL family.

Its subcellular location is the secreted. This chain is Defensin-like protein 35, found in Arabidopsis thaliana (Mouse-ear cress).